A 142-amino-acid chain; its full sequence is Peptide methionine sulfoxide reductase MsrB (142 aa).

The region spanning 3–126 is the MsrB domain; it reads KEELKKKLSP…NSAALRFIPF (124 aa). The active-site Nucleophile is C115.

It belongs to the MsrB Met sulfoxide reductase family.

The enzyme catalyses L-methionyl-[protein] + [thioredoxin]-disulfide + H2O = L-methionyl-(R)-S-oxide-[protein] + [thioredoxin]-dithiol. The polypeptide is Peptide methionine sulfoxide reductase MsrB (Lactococcus lactis subsp. cremoris (strain SK11)).